The chain runs to 324 residues: Ribose-phosphate pyrophosphokinase (324 aa).

ATP contacts are provided by residues 45 to 47 and 104 to 105; these read NGE and RQ. Residues His-138 and Asp-178 each coordinate Mg(2+). Lys-201 is a catalytic residue. Residues Arg-203, Asp-229, and 233 to 237 each bind D-ribose 5-phosphate; that span reads DTGGT.

The protein belongs to the ribose-phosphate pyrophosphokinase family. Class I subfamily. In terms of assembly, homohexamer. The cofactor is Mg(2+).

The protein resides in the cytoplasm. The enzyme catalyses D-ribose 5-phosphate + ATP = 5-phospho-alpha-D-ribose 1-diphosphate + AMP + H(+). Its pathway is metabolic intermediate biosynthesis; 5-phospho-alpha-D-ribose 1-diphosphate biosynthesis; 5-phospho-alpha-D-ribose 1-diphosphate from D-ribose 5-phosphate (route I): step 1/1. Functionally, involved in the biosynthesis of the central metabolite phospho-alpha-D-ribosyl-1-pyrophosphate (PRPP) via the transfer of pyrophosphoryl group from ATP to 1-hydroxyl of ribose-5-phosphate (Rib-5-P). The protein is Ribose-phosphate pyrophosphokinase of Streptomyces coelicolor (strain ATCC BAA-471 / A3(2) / M145).